Here is a 136-residue protein sequence, read N- to C-terminus: MRVLNFVLTTTVVLLTSSEGIASSPQVRHIKPNVAIDHLSIRSLRATENPGSDESRLNEKDTGFDPDGSSSKEDEDIGEPTFWEKVRFRYWKTMGKTPGDLRKEYFEGMDEAVIKNNPNYKLVQQYEVYYDEKSSE.

Positions 1–22 are cleaved as a signal peptide; the sequence is MRVLNFVLTTTVVLLTSSEGIA. The short motif at 42-56 is the RxLR-dEER element; the sequence is RSLRATENPGSDESR. Positions 42–78 are disordered; that stretch reads RSLRATENPGSDESRLNEKDTGFDPDGSSSKEDEDIG. A compositionally biased stretch (basic and acidic residues) spans 53–63; that stretch reads DESRLNEKDTG.

The protein belongs to the RxLR effector family.

Its subcellular location is the secreted. It localises to the host cytoplasm. It is found in the host nucleus. In terms of biological role, effector that acts as a broad suppressor of cell death to interrupt plant immunity. Inhibits cell death induced by cell death-inducing proteins, including the PAMP elicitor INF1 from P.infestans. The sequence is that of Secreted RxLR effector protein 10 from Plasmopara viticola (Downy mildew of grapevine).